Consider the following 402-residue polypeptide: Tyrosine--tRNA ligase (402 aa).

The 'HIGH' region signature appears at 48 to 57 (PSRPDLHLGH). The 'KMSKS' region signature appears at 232-236 (KMSKS). K235 is an ATP binding site. One can recognise an S4 RNA-binding domain in the interval 339 to 402 (MPIIDLLTLL…KRKFFKIRSK (64 aa)).

Belongs to the class-I aminoacyl-tRNA synthetase family. TyrS type 2 subfamily. Homodimer.

The protein resides in the cytoplasm. It catalyses the reaction tRNA(Tyr) + L-tyrosine + ATP = L-tyrosyl-tRNA(Tyr) + AMP + diphosphate + H(+). In terms of biological role, catalyzes the attachment of tyrosine to tRNA(Tyr) in a two-step reaction: tyrosine is first activated by ATP to form Tyr-AMP and then transferred to the acceptor end of tRNA(Tyr). This Chlorobium chlorochromatii (strain CaD3) protein is Tyrosine--tRNA ligase.